The chain runs to 312 residues: Pyridoxal kinase (312 aa).

M1 carries the post-translational modification N-acetylmethionine. Pyridoxal contacts are provided by S12 and T47. Pyridoxal 5'-phosphate is bound at residue T47. S59 carries the post-translational modification Phosphoserine. D113 is an ATP binding site. D113 lines the Na(+) pocket. Position 118 (D118) interacts with Mg(2+). A Na(+)-binding site is contributed by T148. Residue 150–153 (NQFE) participates in ATP binding. Phosphoserine is present on S164. A Na(+)-binding site is contributed by T186. 186–187 (TS) provides a ligand contact to ATP. Residue S213 is modified to Phosphoserine. ATP contacts are provided by residues 226–228 (VDA) and T233. 234 to 235 (GD) contributes to the pyridoxal 5'-phosphate binding site. Residue D235 is the Proton acceptor of the active site. Phosphoserine is present on S285.

The protein belongs to the pyridoxine kinase family. As to quaternary structure, homodimer. The cofactor is Mg(2+). Zn(2+) serves as cofactor. Requires Co(2+) as cofactor. It depends on Mn(2+) as a cofactor. Ubiquitous. Highly expressed in testis. As to expression, in adult testis and spermatozoa.

It is found in the cytoplasm. The protein resides in the cytosol. It carries out the reaction pyridoxal + ATP = pyridoxal 5'-phosphate + ADP + H(+). It catalyses the reaction pyridoxamine + ATP = pyridoxamine 5'-phosphate + ADP + H(+). The enzyme catalyses pyridoxine + ATP = pyridoxine 5'-phosphate + ADP + H(+). It participates in cofactor metabolism; pyridoxal 5'-phosphate salvage; pyridoxal 5'-phosphate from pyridoxal: step 1/1. It functions in the pathway cofactor metabolism; pyridoxal 5'-phosphate salvage; pyridoxine 5'-phosphate from pyridoxine: step 1/1. Its pathway is cofactor metabolism; pyridoxal 5'-phosphate salvage; pyridoxamine 5'-phosphate from pyridoxamine: step 1/1. Its activity is regulated as follows. Catalytic activity is inhibited competitively by 4-deoxypyridoxine, and is also inhibited by the benzodiazepine receptor ligands 1012S and ethyl-beta-carboline-3-carboxylate. Inhibited by ginkgotoxin, theophylline, lamotrigine, enprofylline, theobromine, and caffeine. Activity is increased in the presence of K(+)or Na(+). In terms of biological role, catalyzes the phosphorylation of the dietary vitamin B6 vitamers pyridoxal (PL), pyridoxine (PN) and pyridoxamine (PM) to form pyridoxal 5'-phosphate (PLP), pyridoxine 5'-phosphate (PNP) and pyridoxamine 5'-phosphate (PMP), respectively. PLP is the active form of vitamin B6, and acts as a cofactor for over 140 different enzymatic reactions. This is Pyridoxal kinase from Homo sapiens (Human).